A 545-amino-acid chain; its full sequence is T-complex protein 1 subunit gamma (545 aa).

Position 1 is an N-acetylmethionine (Met1). The interval 1 to 24 (MMGHRPVLVLSQNTKRESGRKVQS) is disordered. At Ser11 the chain carries Phosphoserine. Lys15 participates in a covalent cross-link: Glycyl lysine isopeptide (Lys-Gly) (interchain with G-Cter in SUMO2). Gly42 is a binding site for ADP. Gly42 is an ATP binding site. Asp93 lines the Mg(2+) pocket. 6 residues coordinate ADP: Gly94, Thr95, Thr96, Ser97, Thr162, and Lys163. 3 residues coordinate ATP: Gly94, Thr95, and Thr96. Phosphoserine is present on Ser170. N6-acetyllysine is present on Lys222. Phosphoserine occurs at positions 243 and 244. Residue Tyr247 is modified to Phosphotyrosine. Residues Lys248 and Lys249 each participate in a glycyl lysine isopeptide (Lys-Gly) (interchain with G-Cter in SUMO2) cross-link. Phosphoserine is present on Ser252. Cys366 and Cys372 form a disulfide bridge. Lys381 is covalently cross-linked (Glycyl lysine isopeptide (Lys-Gly) (interchain with G-Cter in SUMO2)). Position 411 (Gly411) interacts with ADP. Residue Gly411 coordinates ATP. Thr430 and Thr459 each carry phosphothreonine. ADP-binding residues include Gly482, Glu483, Glu497, and Lys502. ATP is bound at residue Gly482. ATP is bound at residue Glu497. Residues 526–545 (HKKKGDDQNRQTGAPDAGQE) are disordered.

This sequence belongs to the TCP-1 chaperonin family. As to quaternary structure, component of the chaperonin-containing T-complex (TRiC), a hexadecamer composed of two identical back-to-back stacked rings enclosing a protein folding chamber. Each ring is made up of eight different subunits: TCP1/CCT1, CCT2, CCT3, CCT4, CCT5, CCT6A/CCT6, CCT7, CCT8. Interacts with PACRG. Interacts with DNAAF4. Interacts with DLEC1. The N-terminus is blocked.

The protein localises to the cytoplasm. The enzyme catalyses ATP + H2O = ADP + phosphate + H(+). Component of the chaperonin-containing T-complex (TRiC), a molecular chaperone complex that assists the folding of actin, tubulin and other proteins upon ATP hydrolysis. The TRiC complex mediates the folding of WRAP53/TCAB1, thereby regulating telomere maintenance. As part of the TRiC complex may play a role in the assembly of BBSome, a complex involved in ciliogenesis regulating transports vesicles to the cilia. The chain is T-complex protein 1 subunit gamma (Cct3) from Mus musculus (Mouse).